The following is a 399-amino-acid chain: Tryptophan synthase beta chain (399 aa).

Lysine 92 carries the N6-(pyridoxal phosphate)lysine modification.

The protein belongs to the TrpB family. Tetramer of two alpha and two beta chains. Pyridoxal 5'-phosphate is required as a cofactor.

The catalysed reaction is (1S,2R)-1-C-(indol-3-yl)glycerol 3-phosphate + L-serine = D-glyceraldehyde 3-phosphate + L-tryptophan + H2O. It functions in the pathway amino-acid biosynthesis; L-tryptophan biosynthesis; L-tryptophan from chorismate: step 5/5. Its function is as follows. The beta subunit is responsible for the synthesis of L-tryptophan from indole and L-serine. This Oceanobacillus iheyensis (strain DSM 14371 / CIP 107618 / JCM 11309 / KCTC 3954 / HTE831) protein is Tryptophan synthase beta chain.